The primary structure comprises 251 residues: Putative F-box protein L166 (251 aa).

In terms of domain architecture, F-box spans 1–46; the sequence is MDNICELFDEILPLIIEYLSDHDKVKFMTTCSRLYYFIDKVYYENI. The disordered stretch occupies residues 188–251; the sequence is PEPESQENFR…RPKSFMKYRR (64 aa). Over residues 202–217 the composition is skewed to polar residues; the sequence is TESNNNKPVNKSQPQI. The span at 241–251 shows a compositional bias: basic residues; sequence KRPKSFMKYRR.

The protein is Putative F-box protein L166 of Acanthamoeba polyphaga (Amoeba).